We begin with the raw amino-acid sequence, 407 residues long: E3 ubiquitin-protein ligase TRIM13 (407 aa).

An RING-type zinc finger spans residues 10–58 (CPICCSLFDDPRVLPCSHNFCKKCLEGILEGNVRNSLWRSSPFKCPTCR). The B box-type zinc finger occupies 89–131 (PKMPVCKGHLGQPLNIFCLTDMQLICGICATRGEHTKHVFCSI). Positions 94, 97, 117, and 123 each coordinate Zn(2+). A coiled-coil region spans residues 172–200 (LQLLTKDSDKVKEFFEKLQYTLDQKKNEI). A helical membrane pass occupies residues 316–336 (PLFVVVILLGLLIFFSPTMFL).

In terms of assembly, interacts (via C-terminal domain) with VCP. Interacts with AKT1; the interaction ubiquitinates AKT1 and leads to its proteasomal degradation. Interacts with MDM2; the interaction ubiquitinates AKT1 and leads to its proteasomal degradation. Interacts with p62/SQSTM1. Interacts with TRAF6. Interacts with IKBKG/NEMO. Auto-ubiquitinated; requires the RING-type zinc finger. Auto-polyubiquitination leads to proteasomal degradation.

The protein resides in the endoplasmic reticulum membrane. It carries out the reaction S-ubiquitinyl-[E2 ubiquitin-conjugating enzyme]-L-cysteine + [acceptor protein]-L-lysine = [E2 ubiquitin-conjugating enzyme]-L-cysteine + N(6)-ubiquitinyl-[acceptor protein]-L-lysine.. The protein operates within protein modification; protein ubiquitination. Functionally, endoplasmic reticulum (ER) membrane anchored E3 ligase involved in the retrotranslocation and turnover of membrane and secretory proteins from the ER through a set of processes named ER-associated degradation (ERAD). This process acts on misfolded proteins as well as in the regulated degradation of correctly folded proteins. Enhances ionizing radiation-induced p53/TP53 stability and apoptosis via ubiquitinating MDM2 and AKT1 and decreasing AKT1 kinase activity through MDM2 and AKT1 proteasomal degradation. Regulates ER stress-induced autophagy, and may act as a tumor suppressor. Also plays a role in innate immune response by stimulating NF-kappa-B activity in the TLR2 signaling pathway. Ubiquitinates TRAF6 via the 'Lys-29'-linked polyubiquitination chain resulting in NF-kappa-B activation. Participates as well in T-cell receptor-mediated NF-kappa-B activation. In the presence of TNF, modulates the IKK complex by regulating IKBKG/NEMO ubiquitination leading to the repression of NF-kappa-B. This is E3 ubiquitin-protein ligase TRIM13 (TRIM13) from Bos taurus (Bovine).